The sequence spans 221 residues: Transmembrane protein 225B (221 aa).

A run of 4 transmembrane segments spans residues W14–F34, V77–A97, F109–H129, and V147–I167.

It localises to the membrane. The polypeptide is Transmembrane protein 225B (Homo sapiens (Human)).